The following is a 70-amino-acid chain: Beta-insect excitatory toxin LqqIT1 (70 aa).

The LCN-type CS-alpha/beta domain occupies 2–65; that stretch reads KNGYAVDSSG…ISDARKKYCD (64 aa). 4 cysteine pairs are disulfide-bonded: cysteine 16–cysteine 37, cysteine 22–cysteine 42, cysteine 26–cysteine 44, and cysteine 38–cysteine 64.

This sequence belongs to the long (4 C-C) scorpion toxin superfamily. Sodium channel inhibitor family. Beta subfamily. Expressed by the venom gland.

Its subcellular location is the secreted. Excitatory insect beta-toxins induce a spastic paralysis. They bind voltage-independently at site-4 of sodium channels (Nav) and shift the voltage of activation toward more negative potentials thereby affecting sodium channel activation and promoting spontaneous and repetitive firing. In vivo, this toxin induces a fast excitatory contraction paralysis on fly larvae. It is active only on insects. The sequence is that of Beta-insect excitatory toxin LqqIT1 from Leiurus quinquestriatus quinquestriatus (Egyptian scorpion).